Here is a 111-residue protein sequence, read N- to C-terminus: Small ribosomal subunit protein uS17 (111 aa).

Belongs to the universal ribosomal protein uS17 family. Part of the 30S ribosomal subunit.

One of the primary rRNA binding proteins, it binds specifically to the 5'-end of 16S ribosomal RNA. In Archaeoglobus fulgidus (strain ATCC 49558 / DSM 4304 / JCM 9628 / NBRC 100126 / VC-16), this protein is Small ribosomal subunit protein uS17.